The chain runs to 83 residues: Exodeoxyribonuclease 7 small subunit (83 aa).

The protein belongs to the XseB family. Heterooligomer composed of large and small subunits.

Its subcellular location is the cytoplasm. It carries out the reaction Exonucleolytic cleavage in either 5'- to 3'- or 3'- to 5'-direction to yield nucleoside 5'-phosphates.. Functionally, bidirectionally degrades single-stranded DNA into large acid-insoluble oligonucleotides, which are then degraded further into small acid-soluble oligonucleotides. The chain is Exodeoxyribonuclease 7 small subunit from Brucella melitensis biotype 1 (strain ATCC 23456 / CCUG 17765 / NCTC 10094 / 16M).